The sequence spans 480 residues: Probable efflux pump outer membrane protein SepC (480 aa).

An N-terminal signal peptide occupies residues 1–16; it reads MKTHYLSIALSVALSG. The N-palmitoyl cysteine moiety is linked to residue Cys17. Cys17 carries S-diacylglycerol cysteine lipidation.

The protein belongs to the outer membrane factor (OMF) (TC 1.B.17) family.

It is found in the cell outer membrane. Probable outer membrane component of the SepABC efflux pump with unknown specificity. The polypeptide is Probable efflux pump outer membrane protein SepC (sepC) (Pseudomonas putida (strain ATCC 700007 / DSM 6899 / JCM 31910 / BCRC 17059 / LMG 24140 / F1)).